Reading from the N-terminus, the 756-residue chain is Probable chemoreceptor y4sI (756 aa).

The next 2 membrane-spanning stretches (helical) occupy residues 26 to 46 (VCVAVLSCTTVATFAGITSVA) and 330 to 350 (LIKIIGITAATAILALAMAIL). HAMP domains follow at residues 353–406 (RSIS…ARVA) and 434–486 (DEQA…ETIR). The Methyl-accepting transducer domain occupies 491–720 (QAASMSSIVS…ESDAACRSLN (230 aa)). The interval 736–756 (GGGSSTRQPQSPPTQRYFMSR) is disordered.

Belongs to the methyl-accepting chemotaxis (MCP) protein family.

It is found in the cell membrane. Functionally, chemotactic-signal transducers respond to changes in the concentration of attractants and repellents in the environment, transduce a signal from the outside to the inside of the cell, and facilitate sensory adaptation through the variation of the level of methylation. Attractants increase the level of methylation while repellents decrease the level of methylation. This Sinorhizobium fredii (strain NBRC 101917 / NGR234) protein is Probable chemoreceptor y4sI.